A 179-amino-acid chain; its full sequence is Small capsomere-interacting protein (179 aa).

Residues 107-179 are disordered; the sequence is IPLPPETGEF…QAPGTKGKKQ (73 aa). Low complexity predominate over residues 118-171; sequence TGGTSSSVRSASGASGGAASTAASGGSASAAASGASGGSASQSDVSSRSRSQQA.

Belongs to the herpesviridae small capsomere-interacting protein family. As to quaternary structure, interacts with the major capsid protein/MCP.

It localises to the virion. The protein localises to the host nucleus. Its function is as follows. Participates in the assembly of the infectious particles by decorating the outer surface of the capsid shell and thus forming a layer between the capsid and the tegument. Complexes composed of the major capsid protein and small capsomere-interacting protein/SCP assemble together in the host cytoplasm and are translocated to the nucleus, where they accumulate and participate in capsid assembly. This Equine herpesvirus 2 (strain 86/87) (EHV-2) protein is Small capsomere-interacting protein.